The chain runs to 60 residues: Large ribosomal subunit protein bL32 (60 aa).

Residues 1 to 21 form a disordered region; it reads MAVQQNKKSPSKRGMHRAHNA. The span at 9 to 19 shows a compositional bias: basic residues; sequence SPSKRGMHRAH.

Belongs to the bacterial ribosomal protein bL32 family.

The polypeptide is Large ribosomal subunit protein bL32 (Albidiferax ferrireducens (strain ATCC BAA-621 / DSM 15236 / T118) (Rhodoferax ferrireducens)).